The primary structure comprises 245 residues: MRRYLILIVALIGITGLSGCYQTSHKKVRFDEGSYTNFIYDNKSYFVTDKEIPQENVNNSKVKFYKLLIVDMKSEKLLSSSNKNSVTLVLNNIYEASDKSLCMGINDRYYKILPESDKGAVKALRLQNFDVTSDISDDNFVIDKNDSRKIDYMGNIYSISDTTVSDEELGEYQDVLAEVRVFDSVSGKSIPRSEWGRIDKDGSNSKQSRTEWDYGEIHSIRGKSLTEAFAVEINDDFKLATKVGN.

Positions 1–19 (MRRYLILIVALIGITGLSG) are cleaved as a signal peptide. Cysteine 20 carries N-palmitoyl cysteine lipidation. Cysteine 20 is lipidated: S-diacylglycerol cysteine.

Its subcellular location is the cell membrane. In terms of biological role, involved in immunity against exogenously supplied nisin. The sequence is that of Nisin immunity protein (nisI) from Lactococcus lactis subsp. lactis (Streptococcus lactis).